The following is a 252-amino-acid chain: 3-deoxy-manno-octulosonate cytidylyltransferase (252 aa).

Belongs to the KdsB family.

It is found in the cytoplasm. It carries out the reaction 3-deoxy-alpha-D-manno-oct-2-ulosonate + CTP = CMP-3-deoxy-beta-D-manno-octulosonate + diphosphate. Its pathway is nucleotide-sugar biosynthesis; CMP-3-deoxy-D-manno-octulosonate biosynthesis; CMP-3-deoxy-D-manno-octulosonate from 3-deoxy-D-manno-octulosonate and CTP: step 1/1. It functions in the pathway bacterial outer membrane biogenesis; lipopolysaccharide biosynthesis. Activates KDO (a required 8-carbon sugar) for incorporation into bacterial lipopolysaccharide in Gram-negative bacteria. The sequence is that of 3-deoxy-manno-octulosonate cytidylyltransferase from Nitratidesulfovibrio vulgaris (strain DP4) (Desulfovibrio vulgaris).